The following is a 367-amino-acid chain: Glutamate 5-kinase (367 aa).

Lys10 contacts ATP. Residues Asp137 and Asn149 each contribute to the substrate site. ATP contacts are provided by residues 169–170 and 211–217; these read TD and TGGMATK. In terms of domain architecture, PUA spans 275–353; it reads AGEITVDDGA…QQISEILGYE (79 aa).

It belongs to the glutamate 5-kinase family.

Its subcellular location is the cytoplasm. It catalyses the reaction L-glutamate + ATP = L-glutamyl 5-phosphate + ADP. The protein operates within amino-acid biosynthesis; L-proline biosynthesis; L-glutamate 5-semialdehyde from L-glutamate: step 1/2. Functionally, catalyzes the transfer of a phosphate group to glutamate to form L-glutamate 5-phosphate. The protein is Glutamate 5-kinase of Yersinia pestis bv. Antiqua (strain Antiqua).